We begin with the raw amino-acid sequence, 105 residues long: Cortistatin (105 aa).

An N-terminal signal peptide occupies residues 1–18; that stretch reads MPLSPGLLLLLLSGATAT. Positions 19 to 74 are excised as a propeptide; sequence AALPLEGGPTGRDSEHMQEAAGIRKSSLLTFLAWWFEWTSQASAGPLIGEEAREVA. A disulfide bridge connects residues C93 and C104.

Belongs to the somatostatin family. As to expression, expressed in a subset of GABAergic cells in the cortex and hippocampus.

It localises to the secreted. Functionally, binds to all human somatostatin receptor (SSTR) subtypes. It also inhibits cAMP production induced by forskolin through SSTRs. The protein is Cortistatin (CORT) of Homo sapiens (Human).